A 436-amino-acid chain; its full sequence is Bifunctional protein GlmU (436 aa).

The segment at 1–226 is pyrophosphorylase; that stretch reads MNEISIIILA…ETNFMGINDK (226 aa). Residues 9–12, Lys23, Gln75, and 82–83 contribute to the UDP-N-acetyl-alpha-D-glucosamine site; these read LAAG and GT. Asp105 provides a ligand contact to Mg(2+). The UDP-N-acetyl-alpha-D-glucosamine site is built by Gly138, Glu152, Asn167, and Asn224. Position 224 (Asn224) interacts with Mg(2+). Residues 227 to 247 are linker; that stretch reads FALSIAEEIMQNRIKENLMKN. Residues 248–436 form an N-acetyltransferase region; the sequence is GVIMSLPDTI…YKFFGKNDEK (189 aa). UDP-N-acetyl-alpha-D-glucosamine is bound by residues Arg311 and Lys328. Catalysis depends on His339, which acts as the Proton acceptor. Residues Tyr342 and Asn353 each contribute to the UDP-N-acetyl-alpha-D-glucosamine site. Acetyl-CoA-binding positions include 362-363, Ser381, Ala399, and Arg416; that span reads NY.

It in the N-terminal section; belongs to the N-acetylglucosamine-1-phosphate uridyltransferase family. In the C-terminal section; belongs to the transferase hexapeptide repeat family. In terms of assembly, homotrimer. Requires Mg(2+) as cofactor.

It is found in the cytoplasm. It catalyses the reaction alpha-D-glucosamine 1-phosphate + acetyl-CoA = N-acetyl-alpha-D-glucosamine 1-phosphate + CoA + H(+). It carries out the reaction N-acetyl-alpha-D-glucosamine 1-phosphate + UTP + H(+) = UDP-N-acetyl-alpha-D-glucosamine + diphosphate. Its pathway is nucleotide-sugar biosynthesis; UDP-N-acetyl-alpha-D-glucosamine biosynthesis; N-acetyl-alpha-D-glucosamine 1-phosphate from alpha-D-glucosamine 6-phosphate (route II): step 2/2. It functions in the pathway nucleotide-sugar biosynthesis; UDP-N-acetyl-alpha-D-glucosamine biosynthesis; UDP-N-acetyl-alpha-D-glucosamine from N-acetyl-alpha-D-glucosamine 1-phosphate: step 1/1. It participates in bacterial outer membrane biogenesis; LPS lipid A biosynthesis. Its function is as follows. Catalyzes the last two sequential reactions in the de novo biosynthetic pathway for UDP-N-acetylglucosamine (UDP-GlcNAc). The C-terminal domain catalyzes the transfer of acetyl group from acetyl coenzyme A to glucosamine-1-phosphate (GlcN-1-P) to produce N-acetylglucosamine-1-phosphate (GlcNAc-1-P), which is converted into UDP-GlcNAc by the transfer of uridine 5-monophosphate (from uridine 5-triphosphate), a reaction catalyzed by the N-terminal domain. This is Bifunctional protein GlmU from Campylobacter fetus subsp. fetus (strain 82-40).